The chain runs to 172 residues: Large ribosomal subunit protein uL10 (172 aa).

This sequence belongs to the universal ribosomal protein uL10 family. As to quaternary structure, part of the ribosomal stalk of the 50S ribosomal subunit. The N-terminus interacts with L11 and the large rRNA to form the base of the stalk. The C-terminus forms an elongated spine to which L12 dimers bind in a sequential fashion forming a multimeric L10(L12)X complex.

Functionally, forms part of the ribosomal stalk, playing a central role in the interaction of the ribosome with GTP-bound translation factors. In Chlorobium chlorochromatii (strain CaD3), this protein is Large ribosomal subunit protein uL10.